Reading from the N-terminus, the 284-residue chain is Four and a half LIM domains protein 5 (284 aa).

A C4-type zinc finger spans residues 8-32; the sequence is CQYCTSSLIGKKYVLKDDNLYCISC. LIM zinc-binding domains follow at residues 39-100, 101-160, and 161-220; these read NYCE…ECSS, KCFH…KEFA, and HYCN…LYAK.

Interacts with CREM (via the third LIM domain). Interacts (via second LIM domain) with SPAG8. In terms of tissue distribution, testis-specific, temporal expression is coordinated with CREM.

Its subcellular location is the nucleus. In terms of biological role, may be involved in the regulation of spermatogenesis. Stimulates CREM transcriptional activity in a phosphorylation-independent manner. The protein is Four and a half LIM domains protein 5 (Fhl5) of Mus musculus (Mouse).